A 938-amino-acid polypeptide reads, in one-letter code: ATP-dependent 6-phosphofructokinase subunit beta (938 aa).

Residues 1-552 (MTQSLPLLNG…HLDNFMAINS (552 aa)) are N-terminal catalytic PFK domain 1. ATP-binding positions include Gly185, 249 to 250 (RC), and 279 to 282 (GDGS). Asp280 contacts Mg(2+). Beta-D-fructose 6-phosphate is bound by residues 325 to 327 (SID), Arg362, 369 to 371 (MGR), Glu426, Arg454, and 460 to 463 (HVQR). Catalysis depends on Asp327, which acts as the Proton acceptor. The segment at 553-566 (ADHIEPKLPEHTHM) is interdomain linker. Residues 567 to 938 (KIAIVNVGAP…ADHLVGRKKL (372 aa)) are C-terminal regulatory PFK domain 2. Residues Arg637, 695–699 (TLSNN), Arg733, 740–742 (QGG), Lys826, 832–835 (HVQQ), and Arg915 contribute to the beta-D-fructose 2,6-bisphosphate site.

Belongs to the phosphofructokinase type A (PFKA) family. ATP-dependent PFK group I subfamily. Eukaryotic two domain clade 'E' sub-subfamily. As to quaternary structure, heterooctamer of 4 alpha and 4 beta chains. The cofactor is Mg(2+).

The protein resides in the cytoplasm. It carries out the reaction beta-D-fructose 6-phosphate + ATP = beta-D-fructose 1,6-bisphosphate + ADP + H(+). It functions in the pathway carbohydrate degradation; glycolysis; D-glyceraldehyde 3-phosphate and glycerone phosphate from D-glucose: step 3/4. Allosterically activated by ADP, AMP, or fructose 2,6-bisphosphate, and allosterically inhibited by ATP or citrate. In terms of biological role, catalyzes the phosphorylation of D-fructose 6-phosphate to fructose 1,6-bisphosphate by ATP, the first committing step of glycolysis. This chain is ATP-dependent 6-phosphofructokinase subunit beta (PFK2), found in Kluyveromyces lactis (strain ATCC 8585 / CBS 2359 / DSM 70799 / NBRC 1267 / NRRL Y-1140 / WM37) (Yeast).